The primary structure comprises 1325 residues: Clustered mitochondria protein homolog (1325 aa).

Positions 311 to 573 (PKHESDPMRT…RHTPMDVTWL (263 aa)) constitute a Clu domain. 3 disordered regions span residues 893-937 (KHAE…PLRT), 1032-1063 (DSNQGSSSDGDRIGTNDAGSADGSKTEHDDQL), and 1245-1325 (QHAR…AKRS). The span at 1265-1275 (SAHHHHHRHLH) shows a compositional bias: basic residues. Over residues 1276–1285 (QQQQNSSSSP) the composition is skewed to low complexity. A compositionally biased stretch (basic residues) spans 1314-1325 (AARKRAARAKRS).

It belongs to the CLU family. As to quaternary structure, may associate with the eukaryotic translation initiation factor 3 (eIF-3) complex.

The protein resides in the cytoplasm. In terms of biological role, mRNA-binding protein involved in proper cytoplasmic distribution of mitochondria. The polypeptide is Clustered mitochondria protein homolog (Malassezia globosa (strain ATCC MYA-4612 / CBS 7966) (Dandruff-associated fungus)).